The following is a 262-amino-acid chain: Pyridoxine 5'-phosphate synthase (262 aa).

Asn6 is a 3-amino-2-oxopropyl phosphate binding site. Asp8–His9 contacts 1-deoxy-D-xylulose 5-phosphate. Position 17 (Arg17) interacts with 3-amino-2-oxopropyl phosphate. The Proton acceptor role is filled by His43. 2 residues coordinate 1-deoxy-D-xylulose 5-phosphate: Arg45 and His50. Residue Glu70 is the Proton acceptor of the active site. Thr102 is a binding site for 1-deoxy-D-xylulose 5-phosphate. The active-site Proton donor is His215. Residues Gly216 and Gly237–His238 contribute to the 3-amino-2-oxopropyl phosphate site.

This sequence belongs to the PNP synthase family. In terms of assembly, homooctamer; tetramer of dimers.

The protein localises to the cytoplasm. The enzyme catalyses 3-amino-2-oxopropyl phosphate + 1-deoxy-D-xylulose 5-phosphate = pyridoxine 5'-phosphate + phosphate + 2 H2O + H(+). The protein operates within cofactor biosynthesis; pyridoxine 5'-phosphate biosynthesis; pyridoxine 5'-phosphate from D-erythrose 4-phosphate: step 5/5. Catalyzes the complicated ring closure reaction between the two acyclic compounds 1-deoxy-D-xylulose-5-phosphate (DXP) and 3-amino-2-oxopropyl phosphate (1-amino-acetone-3-phosphate or AAP) to form pyridoxine 5'-phosphate (PNP) and inorganic phosphate. The chain is Pyridoxine 5'-phosphate synthase from Helicobacter pylori (strain HPAG1).